Here is a 377-residue protein sequence, read N- to C-terminus: MIAVSGPSYEAFSYGGQARFNNQTVVDKVPPDMLHLIDANWYQYPPLNPMWHGILGFVIGMLGFVSAMGNGMVVYIFLSTKSLRTPSNLFVINLAISNFLMMFCMSPPMVINCYYETWVLGPLFCQIYAMLGSLFGCGSIWTMTMIAFDRYNVIVKGLSGKPLSINGALIRIIAIWLFSLGWTIAPMFGWNRYVPEGNMTACGTDYFNRGLLSASYLVCYGIWVYFVPLFLIIYSYWFIIQAVAAHEKNMREQAKKMNVASLRSSENQNTSAECKLAKVALMTISLWFMAWTPYLVINFSGIFNLVKISPLFTIWGSLFAKANAVYNPIVYGISHPKYRAALFAKFPSLACAAEPSSDAVSTTSGTTTVTDNEKSNA.

The Extracellular segment spans residues 1 to 51 (MIAVSGPSYEAFSYGGQARFNNQTVVDKVPPDMLHLIDANWYQYPPLNPMW). Asn-22 is a glycosylation site (N-linked (GlcNAc...) asparagine). Residues 52 to 76 (HGILGFVIGMLGFVSAMGNGMVVYI) form a helical membrane-spanning segment. The Cytoplasmic portion of the chain corresponds to 77 to 88 (FLSTKSLRTPSN). The helical transmembrane segment at 89–113 (LFVINLAISNFLMMFCMSPPMVINC) threads the bilayer. Over 114–128 (YYETWVLGPLFCQIY) the chain is Extracellular. Cys-125 and Cys-202 form a disulfide bridge. The helical transmembrane segment at 129–148 (AMLGSLFGCGSIWTMTMIAF) threads the bilayer. The Cytoplasmic portion of the chain corresponds to 149–167 (DRYNVIVKGLSGKPLSING). The chain crosses the membrane as a helical span at residues 168–191 (ALIRIIAIWLFSLGWTIAPMFGWN). Topologically, residues 192 to 215 (RYVPEGNMTACGTDYFNRGLLSAS) are extracellular. The N-linked (GlcNAc...) asparagine glycan is linked to Asn-198. A helical transmembrane segment spans residues 216 to 243 (YLVCYGIWVYFVPLFLIIYSYWFIIQAV). The Cytoplasmic portion of the chain corresponds to 244 to 278 (AAHEKNMREQAKKMNVASLRSSENQNTSAECKLAK). Residues 279–302 (VALMTISLWFMAWTPYLVINFSGI) form a helical membrane-spanning segment. Topologically, residues 303 to 309 (FNLVKIS) are extracellular. A helical transmembrane segment spans residues 310–334 (PLFTIWGSLFAKANAVYNPIVYGIS). The residue at position 321 (Lys-321) is an N6-(retinylidene)lysine. Residues 335–377 (HPKYRAALFAKFPSLACAAEPSSDAVSTTSGTTTVTDNEKSNA) are Cytoplasmic-facing. A compositionally biased stretch (low complexity) spans 357–370 (SDAVSTTSGTTTVT). The segment at 357 to 377 (SDAVSTTSGTTTVTDNEKSNA) is disordered.

It belongs to the G-protein coupled receptor 1 family. Opsin subfamily. Post-translationally, phosphorylated on some or all of the serine and threonine residues present in the C-terminal region.

The protein resides in the membrane. Functionally, visual pigments are the light-absorbing molecules that mediate vision. They consist of an apoprotein, opsin, covalently linked to 11-cis-retinal. The protein is Rhodopsin, long-wavelength of Apis mellifera (Honeybee).